Here is a 492-residue protein sequence, read N- to C-terminus: Solute carrier family 2, facilitated glucose transporter member 1 (492 aa).

An N-acetylmethionine modification is found at M1. Over 1-11 (MEPSSKKLTGR) the chain is Cytoplasmic. A helical membrane pass occupies residues 12-33 (LMLAVGGAVLGSLQFGYNTGVI). Topologically, residues 34–66 (NAPQKVIEEFYNQTWLHRYGESISPATLTTLWS) are extracellular. N45 carries N-linked (GlcNAc...) asparagine glycosylation. The chain crosses the membrane as a helical span at residues 67 to 87 (LSVAIFSVGGMIGSFSVGLFV). Residues 88–90 (NRF) lie on the Cytoplasmic side of the membrane. Residues 91–112 (GRRNSMLMMNLLAFISAVLMGF) traverse the membrane as a helical segment. Over 113 to 120 (SKLGKSFE) the chain is Extracellular. The chain crosses the membrane as a helical span at residues 121 to 144 (MLILGRFIIGVYCGLTTGFVPMYV). At 145–155 (GEVSPTALRGA) the chain is on the cytoplasmic side. A helical transmembrane segment spans residues 156-176 (LGTLHQLGIVVGILIAQVFGL). Residue Q161 participates in D-glucose binding. The Extracellular portion of the chain corresponds to 177 to 185 (DSIMGNEEL). Residues 186 to 206 (WPLLLSVIFIPALLQCVLLPF) traverse the membrane as a helical segment. Residues 207–271 (CPESPRFLLI…LFRSAAYRQP (65 aa)) lie on the Cytoplasmic side of the membrane. S226 bears the Phosphoserine mark. A helical membrane pass occupies residues 272 to 293 (ILIAVVLQLSQQLSGINAVFYY). Residues 282–283 (QQ) and N288 contribute to the D-glucose site. The Extracellular portion of the chain corresponds to 294-306 (STSIFEKAGVQQP). A helical membrane pass occupies residues 307 to 328 (VYATIGSGIVNTAFTVVSLFVV). N317 contacts D-glucose. Residues 329 to 334 (ERAGRR) are Cytoplasmic-facing. A helical transmembrane segment spans residues 335–355 (TLHLIGLAGMAGCAVLMTIAL). Topologically, residues 356-365 (ALLEQLPWMS) are extracellular. A helical transmembrane segment spans residues 366–388 (YLSIVAIFGFVAFFEVGPGPIPW). The D-glucose site is built by E380 and W388. The Cytoplasmic segment spans residues 389-401 (FIVAELFSQGPRP). The chain crosses the membrane as a helical span at residues 402 to 422 (AAIAVAGFSNWTSNFIVGMCF). Residues 423-429 (QYVEQLC) are Extracellular-facing. Residues 430 to 450 (GPYVFIIFTVLLVLFFIFTYF) form a helical membrane-spanning segment. Position 465 is a phosphoserine (S465). The disordered stretch occupies residues 468–492 (RQGGASQSDKTPEELFHPLGADSQV). The residue at position 478 (T478) is a Phosphothreonine. S490 is modified (phosphoserine).

It belongs to the major facilitator superfamily. Sugar transporter (TC 2.A.1.1) family. Glucose transporter subfamily. As to quaternary structure, found in a complex with ADD2, DMTN and SLC2A1. Interacts (via C-terminus cytoplasmic region) with DMTN. Interacts with SNX27; the interaction is required when endocytosed to prevent degradation in lysosomes and promote recycling to the plasma membrane. Interacts with GIPC (via PDZ domain). Interacts with STOM. Interacts with SGTA (via Gln-rich region). Interacts with BSG. Interacts with SMIM43; the interaction may promote SLC2A1-mediated glucose transport to meet the energy needs of mesendoderm differentiation. Post-translationally, phosphorylation at Ser-226 by PKC promotes glucose uptake by increasing cell membrane localization.

It localises to the cell membrane. The protein localises to the photoreceptor inner segment. It catalyses the reaction D-glucose(out) = D-glucose(in). Its activity is regulated as follows. The uptake of glucose is inhibited by cytochalasin B. Glucose uptake is increased in response to phorbol ester 12-O-tetradecanoylphorbol-13-acetate (TPA) treatment: TPA-induced glucose uptake requires phosphorylation at Ser-226. Facilitative glucose transporter, which is responsible for constitutive or basal glucose uptake. Has a very broad substrate specificity; can transport a wide range of aldoses including both pentoses and hexoses. Most important energy carrier of the brain: present at the blood-brain barrier and assures the energy-independent, facilitative transport of glucose into the brain. In association with BSG and NXNL1, promotes retinal cone survival by increasing glucose uptake into photoreceptors. Required for mesendoderm differentiation. This is Solute carrier family 2, facilitated glucose transporter member 1 from Sus scrofa (Pig).